Reading from the N-terminus, the 192-residue chain is GTP cyclohydrolase 1 (192 aa).

Zn(2+) contacts are provided by Cys82, His85, and Cys153.

Belongs to the GTP cyclohydrolase I family. Toroid-shaped homodecamer, composed of two pentamers of five dimers.

The catalysed reaction is GTP + H2O = 7,8-dihydroneopterin 3'-triphosphate + formate + H(+). It participates in cofactor biosynthesis; 7,8-dihydroneopterin triphosphate biosynthesis; 7,8-dihydroneopterin triphosphate from GTP: step 1/1. This chain is GTP cyclohydrolase 1, found in Rickettsia bellii (strain OSU 85-389).